Consider the following 601-residue polypeptide: Elongation factor 4 (601 aa).

One can recognise a tr-type G domain in the interval 8–189 (EQIRNFGIIA…LIVRKAPPPK (182 aa)). 20–25 (DHGKST) is a GTP binding site.

It belongs to the TRAFAC class translation factor GTPase superfamily. Classic translation factor GTPase family. LepA subfamily.

It localises to the cell membrane. It carries out the reaction GTP + H2O = GDP + phosphate + H(+). Functionally, required for accurate and efficient protein synthesis under certain stress conditions. May act as a fidelity factor of the translation reaction, by catalyzing a one-codon backward translocation of tRNAs on improperly translocated ribosomes. Back-translocation proceeds from a post-translocation (POST) complex to a pre-translocation (PRE) complex, thus giving elongation factor G a second chance to translocate the tRNAs correctly. Binds to ribosomes in a GTP-dependent manner. This chain is Elongation factor 4, found in Tropheryma whipplei (strain Twist) (Whipple's bacillus).